Here is a 190-residue protein sequence, read N- to C-terminus: NADH dehydrogenase [ubiquinone] iron-sulfur protein 3 (190 aa).

Belongs to the complex I 30 kDa subunit family. As to quaternary structure, complex I is composed of about 45 different subunits. This is a component of the iron-sulfur (IP) fragment of the enzyme.

It localises to the mitochondrion inner membrane. It carries out the reaction a ubiquinone + NADH + 5 H(+)(in) = a ubiquinol + NAD(+) + 4 H(+)(out). In terms of biological role, core subunit of the mitochondrial membrane respiratory chain NADH dehydrogenase (Complex I) that is believed to belong to the minimal assembly required for catalysis. Complex I functions in the transfer of electrons from NADH to the respiratory chain. The immediate electron acceptor for the enzyme is believed to be ubiquinone. This chain is NADH dehydrogenase [ubiquinone] iron-sulfur protein 3 (NAD9), found in Oryza sativa subsp. japonica (Rice).